Reading from the N-terminus, the 105-residue chain is Heat shock protein HspQ (105 aa).

It belongs to the HspQ family.

It is found in the cytoplasm. In terms of biological role, involved in the degradation of certain denaturated proteins, including DnaA, during heat shock stress. The sequence is that of Heat shock protein HspQ from Blochmanniella pennsylvanica (strain BPEN).